The chain runs to 217 residues: Proteasome subunit beta type-6-A like protein (217 aa).

The propeptide at 1-16 (MERHLMDSQIKGVSTG) is removed in mature form. Threonine 17 (nucleophile) is an active-site residue.

The protein belongs to the peptidase T1B family. The 26S proteasome consists of a 20S proteasome core and two 19S regulatory subunits. The 20S proteasome core is composed of 28 subunits that are arranged in four stacked rings, resulting in a barrel-shaped structure. The two end rings are each formed by seven alpha subunits, and the two central rings are each formed by seven beta subunits. The catalytic chamber with the active sites is on the inside of the barrel.

Its subcellular location is the cytoplasm. The protein localises to the nucleus. The enzyme catalyses Cleavage of peptide bonds with very broad specificity.. Functionally, the proteasome is a multicatalytic proteinase complex which is characterized by its ability to cleave peptides with Arg, Phe, Tyr, Leu, and Glu adjacent to the leaving group at neutral or slightly basic pH. The proteasome has an ATP-dependent proteolytic activity. This subunit is involved in antigen processing to generate class I binding peptides. This is Proteasome subunit beta type-6-A like protein (psmb6l-a) from Salmo salar (Atlantic salmon).